A 573-amino-acid chain; its full sequence is Putative ABC transporter ATP-binding protein LJ_1704 (573 aa).

2 ABC transporter domains span residues 6 to 247 (IEFK…GVRE) and 303 to 536 (LKLD…ASLK). Residues 40-47 (GPSGSGKS) and 337-344 (GQNGAGKT) each bind ATP.

This sequence belongs to the ABC transporter superfamily.

Its subcellular location is the cell membrane. Probably part of an ABC transporter complex. Responsible for energy coupling to the transport system. This is Putative ABC transporter ATP-binding protein LJ_1704 from Lactobacillus johnsonii (strain CNCM I-12250 / La1 / NCC 533).